The chain runs to 227 residues: MSVLPPNRSQTGWPRGVNQFGNKYLQQTKPLTLERTINLYPLTNYTFGTKEPLYEKDSSVAARFQRMREEFDKIGMRRTVEGVLIVHEHRLPHVLLLQLGTTFFKLPGGELNPGEDEVEGLKRLMTEILGRQDGVQQDWVIDDCIGNWWRPNFEPPQYPYIPAHITKPKEHKKLFLVQLQEKALFAVPKNYKLVAAPLFELYDNAPGYGPIISSLPQLLSRFNFIYN.

In terms of domain architecture, Nudix hydrolase spans 76–201 (MRRTVEGVLI…KLVAAPLFEL (126 aa)). Positions 102 to 104 (TFF) are interaction with RNA. The short motif at 109 to 130 (GELNPGEDEVEGLKRLMTEILG) is the Nudix box element.

It belongs to the Nudix hydrolase family. CPSF5 subfamily. As to quaternary structure, homodimer (via N- and C-terminus); binds RNA as homodimer. Component of the cleavage factor Im (CFIm) complex.

It localises to the nucleus. Its subcellular location is the cytoplasm. In terms of biological role, component of the cleavage factor Im (CFIm) complex that functions as an activator of the pre-mRNA 3'-end cleavage and polyadenylation processing required for the maturation of pre-mRNA into functional mRNAs. CFIm contributes to the recruitment of multiprotein complexes on specific sequences on the pre-mRNA 3'-end, so called cleavage and polyadenylation signals (pA signals). Most pre-mRNAs contain multiple pA signals, resulting in alternative cleavage and polyadenylation (APA) producing mRNAs with variable 3'-end formation. The CFIm complex acts as a key regulator of cleavage and polyadenylation site choice during APA through its binding to 5'-UGUA-3' elements localized in the 3'-untranslated region (UTR) for a huge number of pre-mRNAs. Binds to 5'-UGUA-3' elements localized upstream of pA signals that act as enhancers of pre-mRNA 3'-end processing. The homodimer mediates simultaneous sequence-specific recognition of two 5'-UGUA-3' elements within the pre-mRNA. Plays a role in somatic cell fate transitions and pluripotency by regulating widespread changes in gene expression through an APA-dependent function. Binds to chromatin. Binds to, but does not hydrolyze mono- and di-adenosine nucleotides. This Xenopus laevis (African clawed frog) protein is Cleavage and polyadenylation specificity factor subunit 5.